Consider the following 874-residue polypeptide: Alanine--tRNA ligase (874 aa).

Zn(2+)-binding residues include histidine 564, histidine 568, cysteine 666, and histidine 670.

It belongs to the class-II aminoacyl-tRNA synthetase family. The cofactor is Zn(2+).

The protein localises to the cytoplasm. It carries out the reaction tRNA(Ala) + L-alanine + ATP = L-alanyl-tRNA(Ala) + AMP + diphosphate. Catalyzes the attachment of alanine to tRNA(Ala) in a two-step reaction: alanine is first activated by ATP to form Ala-AMP and then transferred to the acceptor end of tRNA(Ala). Also edits incorrectly charged Ser-tRNA(Ala) and Gly-tRNA(Ala) via its editing domain. The polypeptide is Alanine--tRNA ligase (Carboxydothermus hydrogenoformans (strain ATCC BAA-161 / DSM 6008 / Z-2901)).